We begin with the raw amino-acid sequence, 324 residues long: Carbonic anhydrase, chloroplastic (324 aa).

Belongs to the beta-class carbonic anhydrase family. Homohexamer.

The protein resides in the plastid. Its subcellular location is the chloroplast stroma. It catalyses the reaction hydrogencarbonate + H(+) = CO2 + H2O. Reversible hydration of carbon dioxide. This Hordeum vulgare (Barley) protein is Carbonic anhydrase, chloroplastic.